Consider the following 138-residue polypeptide: Ribulose bisphosphate carboxylase small subunit (138 aa).

Belongs to the RuBisCO small chain family. As to quaternary structure, heterohexadecamer of 8 large and 8 small subunits.

It localises to the plastid. The protein resides in the chloroplast. RuBisCO catalyzes two reactions: the carboxylation of D-ribulose 1,5-bisphosphate, the primary event in carbon dioxide fixation, as well as the oxidative fragmentation of the pentose substrate in the photorespiration process. Both reactions occur simultaneously and in competition at the same active site. Although the small subunit is not catalytic it is essential for maximal activity. This chain is Ribulose bisphosphate carboxylase small subunit, found in Porphyra purpurea (Red seaweed).